The chain runs to 419 residues: GTPase Obg (419 aa).

Residues Met1 to Met156 enclose the Obg domain. Residues Ala157–Ile334 form the OBG-type G domain. Residues Gly163–Ser170, Phe188–Ala192, Asp209–Gly212, Asn278–Asp281, and Asn315–Ile317 each bind GTP. Mg(2+) contacts are provided by Ser170 and Thr190. One can recognise an OCT domain in the interval Ile342–Asn419.

This sequence belongs to the TRAFAC class OBG-HflX-like GTPase superfamily. OBG GTPase family. In terms of assembly, monomer. It depends on Mg(2+) as a cofactor.

The protein resides in the cytoplasm. An essential GTPase which binds GTP, GDP and possibly (p)ppGpp with moderate affinity, with high nucleotide exchange rates and a fairly low GTP hydrolysis rate. Plays a role in control of the cell cycle, stress response, ribosome biogenesis and in those bacteria that undergo differentiation, in morphogenesis control. The chain is GTPase Obg from Mesomycoplasma hyopneumoniae (strain J / ATCC 25934 / NCTC 10110) (Mycoplasma hyopneumoniae).